A 1484-amino-acid polypeptide reads, in one-letter code: DNA-directed RNA polymerase subunit beta' (1484 aa).

Zn(2+)-binding residues include Cys-67, Cys-69, Cys-82, and Cys-85. Residues Asp-499, Asp-501, and Asp-503 each contribute to the Mg(2+) site. 4 residues coordinate Zn(2+): Cys-867, Cys-943, Cys-950, and Cys-953.

This sequence belongs to the RNA polymerase beta' chain family. In terms of assembly, the RNAP catalytic core consists of 2 alpha, 1 beta, 1 beta' and 1 omega subunit. When a sigma factor is associated with the core the holoenzyme is formed, which can initiate transcription. Mg(2+) is required as a cofactor. It depends on Zn(2+) as a cofactor.

The catalysed reaction is RNA(n) + a ribonucleoside 5'-triphosphate = RNA(n+1) + diphosphate. DNA-dependent RNA polymerase catalyzes the transcription of DNA into RNA using the four ribonucleoside triphosphates as substrates. The protein is DNA-directed RNA polymerase subunit beta' of Chlorobium phaeovibrioides (strain DSM 265 / 1930) (Prosthecochloris vibrioformis (strain DSM 265)).